The primary structure comprises 522 residues: Lysine--tRNA ligase (522 aa).

The 'HIGH' region motif lies at 44–52; the sequence is PSGLPHIGT. A 'KMSKS' region motif is present at residues 290 to 294; sequence KISKS. Lysine 293 serves as a coordination point for ATP.

It belongs to the class-I aminoacyl-tRNA synthetase family.

Its subcellular location is the cytoplasm. It carries out the reaction tRNA(Lys) + L-lysine + ATP = L-lysyl-tRNA(Lys) + AMP + diphosphate. The chain is Lysine--tRNA ligase from Rickettsia rickettsii (strain Iowa).